Here is a 342-residue protein sequence, read N- to C-terminus: Nicotinate-nucleotide--dimethylbenzimidazole phosphoribosyltransferase (342 aa).

The active-site Proton acceptor is E311.

The protein belongs to the CobT family.

The catalysed reaction is 5,6-dimethylbenzimidazole + nicotinate beta-D-ribonucleotide = alpha-ribazole 5'-phosphate + nicotinate + H(+). It participates in nucleoside biosynthesis; alpha-ribazole biosynthesis; alpha-ribazole from 5,6-dimethylbenzimidazole: step 1/2. Catalyzes the synthesis of alpha-ribazole-5'-phosphate from nicotinate mononucleotide (NAMN) and 5,6-dimethylbenzimidazole (DMB). In Shewanella loihica (strain ATCC BAA-1088 / PV-4), this protein is Nicotinate-nucleotide--dimethylbenzimidazole phosphoribosyltransferase.